Reading from the N-terminus, the 677-residue chain is Protein windpipe (677 aa).

Residues 1–20 (MERVHLTAWLALFLIVVANA) form the signal peptide. The Extracellular portion of the chain corresponds to 21-451 (TPTPARTPTG…IGKPKDDSSA (431 aa)). N-linked (GlcNAc...) asparagine glycans are attached at residues Asn-53 and Asn-80. 4 LRR repeats span residues 91–116 (LPEL…GLKR), 118–133 (NLKH…RKLP), 134–156 (QHLQ…LTHM), and 158–183 (QLHQ…NWLV). Residues Asn-145 and Asn-170 are each glycosylated (N-linked (GlcNAc...) asparagine). The region spanning 184-216 (ERIVYMEHPVVCSYPLEFRGRSWLQLKQDEICK) is the LRRCT domain. Disordered regions lie at residues 264 to 285 (AKKV…SGDL), 298 to 317 (TVAE…ASPS), and 325 to 385 (KDED…TVFS). The segment covering 347 to 372 (SKVKITSEDDIDSDGKPEESDVRPLE) has biased composition (basic and acidic residues). Residues 374–385 (PENSENPDTVFS) are compositionally biased toward polar residues. A helical transmembrane segment spans residues 452 to 472 (IYYLLAVIGLIVVGLVLFVAI). Residues 473-677 (KRCKYDSNAA…EPTHQVINGH (205 aa)) are Cytoplasmic-facing. Disordered regions lie at residues 502–523 (LGKP…LIGE) and 539–677 (NGEA…INGH). Residues 595 to 607 (AQQQQLAEQNNNE) are compositionally biased toward low complexity.

As to quaternary structure, interacts with dome; the interaction promotes internalization of dome and its subsequent lysosomal degradation. In terms of tissue distribution, in adult intestine, expressed in both small progenitor cells and large nuclei enterocytes (at protein level). During embryogenesis, restricted to the developing trachea.

It is found in the cell membrane. Its function is as follows. Plays a role in negative regulation of the JAK/STAT pathway by binding to the receptor dome and promoting its internalization for subsequent lysosomal degradation, thereby reducing JAK/STAT signaling. The chain is Protein windpipe from Drosophila melanogaster (Fruit fly).